Here is a 111-residue protein sequence, read N- to C-terminus: Dormancy-associated protein 1 (111 aa).

A disordered region spans residues 30–60; the sequence is KDDGASNQLMRSTSIPTTPTTPVTPTTPSSA. Positions 41–59 are enriched in low complexity; it reads STSIPTTPTTPVTPTTPSS.

It belongs to the DRM1/ARP family. Expressed in axilary buds and in non-growing stems and roots. Detected in sepals, stamens and carpels, but barely detected in petals or leaflets.

This chain is Dormancy-associated protein 1, found in Pisum sativum (Garden pea).